A 642-amino-acid chain; its full sequence is 1-deoxy-D-xylulose-5-phosphate synthase (642 aa).

Residues His73 and 114-116 (SHA) each bind thiamine diphosphate. Asp145 is a binding site for Mg(2+). Thiamine diphosphate is bound by residues 146–147 (GA), Asn175, Phe286, and Glu367. Mg(2+) is bound at residue Asn175.

This sequence belongs to the transketolase family. DXPS subfamily. Homodimer. Mg(2+) is required as a cofactor. Requires thiamine diphosphate as cofactor.

It catalyses the reaction D-glyceraldehyde 3-phosphate + pyruvate + H(+) = 1-deoxy-D-xylulose 5-phosphate + CO2. The protein operates within metabolic intermediate biosynthesis; 1-deoxy-D-xylulose 5-phosphate biosynthesis; 1-deoxy-D-xylulose 5-phosphate from D-glyceraldehyde 3-phosphate and pyruvate: step 1/1. Catalyzes the acyloin condensation reaction between C atoms 2 and 3 of pyruvate and glyceraldehyde 3-phosphate to yield 1-deoxy-D-xylulose-5-phosphate (DXP). This chain is 1-deoxy-D-xylulose-5-phosphate synthase, found in Saccharopolyspora erythraea (strain ATCC 11635 / DSM 40517 / JCM 4748 / NBRC 13426 / NCIMB 8594 / NRRL 2338).